A 190-amino-acid chain; its full sequence is Putative manganese efflux pump MntP (190 aa).

6 consecutive transmembrane segments (helical) span residues 3-23 (MSATLILAFGMSMDAFAASIG), 41-61 (LIFGVIEAITPLIGWALGFFA), 62-82 (SQYILEWDHWVAFTLLLILGG), 105-127 (LALLVCTAIATSLDAMAIGVGLA), 143-163 (ATMIMVTLGMMIGRYIGPILG), and 168-188 (VMGGLVLIGIGCNILYEHLGY).

Belongs to the MntP (TC 9.B.29) family.

Its subcellular location is the cell inner membrane. In terms of biological role, probably functions as a manganese efflux pump. The sequence is that of Putative manganese efflux pump MntP from Pectobacterium carotovorum subsp. carotovorum (strain PC1).